Reading from the N-terminus, the 579-residue chain is Insulin-like growth factor 2 mRNA-binding protein 3 (579 aa).

RRM domains are found at residues Asn-2–Pro-75 and Arg-81–Asp-156. Residues Ala-160–Lys-192 are disordered. Low complexity predominate over residues Arg-177–Ser-187. The residue at position 184 (Ser-184) is a Phosphoserine. 3 consecutive KH domains span residues Asp-195–Ile-260, Glu-276–Ile-343, and Thr-405–Ile-470. Glycyl lysine isopeptide (Lys-Gly) (interchain with G-Cter in SUMO2) cross-links involve residues Lys-450 and Lys-475. Residues Lys-487–Ile-553 enclose the KH 4 domain. Thr-528 carries the post-translational modification Phosphothreonine.

Belongs to the RRM IMP/VICKZ family. As to quaternary structure, can form homooligomers and heterooligomers with IGF2BP1 and IGF2BP3 in an RNA-dependent manner. Interacts with IGF2BP1. Interacts with ELAVL1, DHX9, HNRNPU, MATR3 and PABPC1. Expressed in fetal liver, fetal lung, fetal kidney, fetal thymus, fetal placenta, fetal follicles of ovary and gonocytes of testis, growing oocytes, spermatogonia and semen (at protein level). Expressed in cervix adenocarcinoma, in testicular, pancreatic and renal-cell carcinomas (at protein level). Expressed ubiquitously during fetal development at 8 and 14 weeks of gestation. Expressed in ovary, testis, brain, placenta, pancreatic cancer tissues and pancreatic cancer cell lines.

Its subcellular location is the nucleus. The protein localises to the cytoplasm. The protein resides in the P-body. It is found in the stress granule. RNA-binding factor that may recruit target transcripts to cytoplasmic protein-RNA complexes (mRNPs). This transcript 'caging' into mRNPs allows mRNA transport and transient storage. It also modulates the rate and location at which target transcripts encounter the translational apparatus and shields them from endonuclease attacks or microRNA-mediated degradation. Preferentially binds to N6-methyladenosine (m6A)-containing mRNAs and increases their stability. Binds to the 3'-UTR of CD44 mRNA and stabilizes it, hence promotes cell adhesion and invadopodia formation in cancer cells. Binds to beta-actin/ACTB and MYC transcripts. Increases MYC mRNA stability by binding to the coding region instability determinant (CRD) and binding is enhanced by m6A-modification of the CRD. Binds to the 5'-UTR of the insulin-like growth factor 2 (IGF2) mRNAs. The polypeptide is Insulin-like growth factor 2 mRNA-binding protein 3 (IGF2BP3) (Homo sapiens (Human)).